Here is a 1072-residue protein sequence, read N- to C-terminus: Carbamoyl phosphate synthase large chain (1072 aa).

The carboxyphosphate synthetic domain stretch occupies residues methionine 1–glutamate 401. ATP is bound by residues arginine 129, arginine 169, glycine 175, glycine 176, lysine 208, leucine 210, glutamate 215, glycine 241, valine 242, histidine 243, glutamine 284, and glutamate 298. Residues lysine 133 to isoleucine 327 form the ATP-grasp 1 domain. The Mg(2+) site is built by glutamine 284, glutamate 298, and asparagine 300. Mn(2+) is bound by residues glutamine 284, glutamate 298, and asparagine 300. Residues isoleucine 402–aspartate 544 form an oligomerization domain region. The interval glutamate 545–glycine 929 is carbamoyl phosphate synthetic domain. The ATP-grasp 2 domain occupies serine 671–leucine 861. Arginine 707, lysine 746, isoleucine 748, glutamate 752, glycine 777, valine 778, histidine 779, serine 780, glutamine 820, and glutamate 832 together coordinate ATP. The Mg(2+) site is built by glutamine 820, glutamate 832, and asparagine 834. Mn(2+) contacts are provided by glutamine 820, glutamate 832, and asparagine 834. An MGS-like domain is found at leucine 930–leucine 1072. Residues leucine 930–leucine 1072 form an allosteric domain region.

This sequence belongs to the CarB family. Composed of two chains; the small (or glutamine) chain promotes the hydrolysis of glutamine to ammonia, which is used by the large (or ammonia) chain to synthesize carbamoyl phosphate. Tetramer of heterodimers (alpha,beta)4. The cofactor is Mg(2+). It depends on Mn(2+) as a cofactor.

The catalysed reaction is hydrogencarbonate + L-glutamine + 2 ATP + H2O = carbamoyl phosphate + L-glutamate + 2 ADP + phosphate + 2 H(+). The enzyme catalyses hydrogencarbonate + NH4(+) + 2 ATP = carbamoyl phosphate + 2 ADP + phosphate + 2 H(+). Its pathway is amino-acid biosynthesis; L-arginine biosynthesis; carbamoyl phosphate from bicarbonate: step 1/1. The protein operates within pyrimidine metabolism; UMP biosynthesis via de novo pathway; (S)-dihydroorotate from bicarbonate: step 1/3. Large subunit of the glutamine-dependent carbamoyl phosphate synthetase (CPSase). CPSase catalyzes the formation of carbamoyl phosphate from the ammonia moiety of glutamine, carbonate, and phosphate donated by ATP, constituting the first step of 2 biosynthetic pathways, one leading to arginine and/or urea and the other to pyrimidine nucleotides. The large subunit (synthetase) binds the substrates ammonia (free or transferred from glutamine from the small subunit), hydrogencarbonate and ATP and carries out an ATP-coupled ligase reaction, activating hydrogencarbonate by forming carboxy phosphate which reacts with ammonia to form carbamoyl phosphate. The sequence is that of Carbamoyl phosphate synthase large chain from Thermoanaerobacter pseudethanolicus (strain ATCC 33223 / 39E) (Clostridium thermohydrosulfuricum).